A 308-amino-acid polypeptide reads, in one-letter code: Acetaldehyde dehydrogenase (308 aa).

Residue 25–28 coordinates NAD(+); the sequence is TGAI. Cysteine 139 functions as the Acyl-thioester intermediate in the catalytic mechanism. Asparagine 279 contacts NAD(+).

It belongs to the acetaldehyde dehydrogenase family.

The catalysed reaction is acetaldehyde + NAD(+) + CoA = acetyl-CoA + NADH + H(+). The polypeptide is Acetaldehyde dehydrogenase (Streptomyces griseus subsp. griseus (strain JCM 4626 / CBS 651.72 / NBRC 13350 / KCC S-0626 / ISP 5235)).